Reading from the N-terminus, the 182-residue chain is Protein Syd (182 aa).

The protein belongs to the Syd family.

It is found in the cell inner membrane. Interacts with the SecY protein in vivo. May bind preferentially to an uncomplexed state of SecY, thus functioning either as a chelating agent for excess SecY in the cell or as a regulatory factor that negatively controls the translocase function. In Aliivibrio salmonicida (strain LFI1238) (Vibrio salmonicida (strain LFI1238)), this protein is Protein Syd.